The chain runs to 315 residues: Ribosomal RNA small subunit methyltransferase H (315 aa).

S-adenosyl-L-methionine-binding positions include 37–39, Asp57, Phe83, Asp105, and Gln112; that span reads GGH.

This sequence belongs to the methyltransferase superfamily. RsmH family.

It localises to the cytoplasm. The enzyme catalyses cytidine(1402) in 16S rRNA + S-adenosyl-L-methionine = N(4)-methylcytidine(1402) in 16S rRNA + S-adenosyl-L-homocysteine + H(+). Its function is as follows. Specifically methylates the N4 position of cytidine in position 1402 (C1402) of 16S rRNA. The sequence is that of Ribosomal RNA small subunit methyltransferase H from Pseudomonas fluorescens (strain Pf0-1).